Consider the following 198-residue polypeptide: FMN-dependent NADH:quinone oxidoreductase (198 aa).

Residues Ser10 and 16–18 each bind FMN; that span reads SIS.

The protein belongs to the azoreductase type 1 family. As to quaternary structure, homodimer. FMN is required as a cofactor.

It carries out the reaction 2 a quinone + NADH + H(+) = 2 a 1,4-benzosemiquinone + NAD(+). It catalyses the reaction N,N-dimethyl-1,4-phenylenediamine + anthranilate + 2 NAD(+) = 2-(4-dimethylaminophenyl)diazenylbenzoate + 2 NADH + 2 H(+). Functionally, quinone reductase that provides resistance to thiol-specific stress caused by electrophilic quinones. In terms of biological role, also exhibits azoreductase activity. Catalyzes the reductive cleavage of the azo bond in aromatic azo compounds to the corresponding amines. The polypeptide is FMN-dependent NADH:quinone oxidoreductase (Mycoplasmopsis pulmonis (strain UAB CTIP) (Mycoplasma pulmonis)).